The following is a 443-amino-acid chain: Xaa-Pro dipeptidase (443 aa).

Residues Asp244, Asp255, His336, Glu381, and Glu420 each contribute to the Mn(2+) site.

This sequence belongs to the peptidase M24B family. Bacterial-type prolidase subfamily. It depends on Mn(2+) as a cofactor.

It carries out the reaction Xaa-L-Pro dipeptide + H2O = an L-alpha-amino acid + L-proline. Splits dipeptides with a prolyl residue in the C-terminal position. The chain is Xaa-Pro dipeptidase from Stenotrophomonas maltophilia (strain K279a).